Here is a 608-residue protein sequence, read N- to C-terminus: MAAAAATAVGPGAGSAGVAGPGGAGPCATVSVFPGARLLTIGDANGEIQRHAEQQALRLEVRAGPDAAGIALYSHEDVCVFKCSVSRETECSRVGRQSFIITLGCNSVLIQFATPHDFCSFYNILKTCRGHTLERSVFSERTEESSAVQYFQFYGYLSQQQNMMQDYVRTGTYQRAILQNHTDFKDKIVLDVGCGSGILSFFAAQAGARKIYAVEASTMAQHAEVLVKSNNLTDRIVVIPGKVEEVSLPEQVDIIISEPMGYMLFNERMLESYLHAKKYLKPSGNMFPTIGDVHLAPFTDEQLYMEQFTKANFWYQPSFHGVDLSALRGAAVDEYFRQPVVDTFDIRILMAKSVKYTVNFLEAKEGDLHRIEIPFKFHMLHSGLVHGLAFWFDVAFIGSIMTVWLSTAPTEPLTHWYQVRCLFQSPLFAKAGDTLSGTCLLIANKRQSYDISIVAQVDQTGSKSSNLLDLKNPFFRYTGTTPSPPPGSHYTSPSENMWNTGSTYNLSSGVAVAGMPTAYDLSSVIAGGSSVGHNNLIPLANTGIVNHTHSRMGSIMSTGIVQGSSGAQGGGGSSSAHYAVNNQFTMGGPAISMASPMSIPTNTMHYGS.

The interval 28 to 139 (ATVSVFPGAR…GHTLERSVFS (112 aa)) is interaction with C9orf72. An SAM-dependent MTase PRMT-type domain is found at 147-454 (AVQYFQFYGY…KRQSYDISIV (308 aa)). S-adenosyl-L-methionine is bound by residues glutamine 160, arginine 169, glycine 193, and glutamate 215. Serine 217 bears the Phosphoserine mark. Lysine 228 participates in a covalent cross-link: Glycyl lysine isopeptide (Lys-Gly) (interchain with G-Cter in ubiquitin). S-adenosyl-L-methionine-binding residues include glutamate 244 and serine 272. Residues 347–380 (RILMAKSVKYTVNFLEAKEGDLHRIEIPFKFHML) form a required for nuclear translocation region. Positions 500-608 (TGSTYNLSSG…IPTNTMHYGS (109 aa)) are transactivation domain. Arginine 551 is modified (dimethylated arginine).

The protein belongs to the class I-like SAM-binding methyltransferase superfamily. Protein arginine N-methyltransferase family. In terms of assembly, homodimer. Interacts with NR1H4. Interacts with SNRPC. Interacts with the C-terminus of NCOA2/GRIP1, NCO3/ACTR and NCOA1/SRC1. Part of a complex consisting of CARM1, EP300/P300 and NCOA2/GRIP1. Interacts with FLII, TP53, myogenic factor MEF2, EP300/P300, TRIM24, CREBBP and CTNNB1. Interacts with RELA. Identified in a complex containing CARM1, TRIM24 and NCOA2/GRIP1. Interacts with NCOA3/SRC3. Interacts with SKP2. Interacts (via PH domain-like fold) with C9orf72. Interacts with PARP1; promoting PARP1 recruimtent to replication forks. Phosphorylation at Ser-217 is strongly increased during mitosis, and decreases rapidly to a very low, basal level after entry into the G1 phase of the cell cycle. Phosphorylation at Ser-217 interferes with S-adenosyl-L-methionine binding and strongly reduces methyltransferase activity. Phosphorylation at Ser-217 may promote cytosolic location. In terms of processing, auto-methylated on Arg-551. Methylation enhances transcription coactivator activity. Methylation is required for its role in the regulation of pre-mRNA alternative splicing. Post-translationally, ubiquitinated by E3 ubiquitin-protein ligase complex containing FBXO9 at Lys-228; leading to proteasomal degradation. In terms of tissue distribution, ubiquitously expressed. Within the brain, present in proliferating cells from lateral ventricular zone and dentate gyrus (at protein level).

The protein resides in the nucleus. It localises to the cytoplasm. The protein localises to the chromosome. The enzyme catalyses L-arginyl-[protein] + 2 S-adenosyl-L-methionine = N(omega),N(omega)-dimethyl-L-arginyl-[protein] + 2 S-adenosyl-L-homocysteine + 2 H(+). Its activity is regulated as follows. Methylation of H3R17 (H3R17me) by CARM1 is stimulated by preacetylation of H3 'Lys-18' (H3K18ac) H3 'Lys-23' (H3K23ac) by EP300 and blocked by citrullination of H3 'Arg-17' (H3R17ci) by PADI4. Its function is as follows. Methylates (mono- and asymmetric dimethylation) the guanidino nitrogens of arginyl residues in several proteins involved in DNA packaging, transcription regulation, pre-mRNA splicing, and mRNA stability. Recruited to promoters upon gene activation together with histone acetyltransferases from EP300/P300 and p160 families, methylates histone H3 at 'Arg-17' (H3R17me), forming mainly asymmetric dimethylarginine (H3R17me2a), leading to activation of transcription via chromatin remodeling. During nuclear hormone receptor activation and TCF7L2/TCF4 activation, acts synergically with EP300/P300 and either one of the p160 histone acetyltransferases NCOA1/SRC1, NCOA2/GRIP1 and NCOA3/ACTR or CTNNB1/beta-catenin to activate transcription. During myogenic transcriptional activation, acts together with NCOA3/ACTR as a coactivator for MEF2C. During monocyte inflammatory stimulation, acts together with EP300/P300 as a coactivator for NF-kappa-B. Acts as a coactivator for PPARG, promotes adipocyte differentiation and the accumulation of brown fat tissue. Plays a role in the regulation of pre-mRNA alternative splicing by methylation of splicing factors. Also seems to be involved in p53/TP53 transcriptional activation. Methylates EP300/P300, both at 'Arg-2142', which may loosen its interaction with NCOA2/GRIP1, and at 'Arg-580' and 'Arg-604' in the KIX domain, which impairs its interaction with CREB and inhibits CREB-dependent transcriptional activation. Also methylates arginine residues in RNA-binding proteins PABPC1, ELAVL1 and ELAV4, which may affect their mRNA-stabilizing properties and the half-life of their target mRNAs. Acts as a transcriptional coactivator of ACACA/acetyl-CoA carboxylase by enriching H3R17 methylation at its promoter, thereby positively regulating fatty acid synthesis. Independently of its methyltransferase activity, involved in replication fork progression: promotes PARP1 recruitment to replication forks, leading to poly-ADP-ribosylation of chromatin at replication forks and reduced fork speed. The polypeptide is Histone-arginine methyltransferase CARM1 (Carm1) (Mus musculus (Mouse)).